Consider the following 575-residue polypeptide: Methionine--tRNA ligase, mitochondrial (575 aa).

Positions 20-32 (PIFYPNAKPHLGH) match the 'HIGH' region motif. Residues 341-345 (KMSKS) carry the 'KMSKS' region motif. K344 is a binding site for ATP.

It belongs to the class-I aminoacyl-tRNA synthetase family.

It is found in the mitochondrion matrix. The enzyme catalyses tRNA(Met) + L-methionine + ATP = L-methionyl-tRNA(Met) + AMP + diphosphate. Catalyzes the attachment of methionine to tRNA(Met) in the mitochondrion. The sequence is that of Methionine--tRNA ligase, mitochondrial (MSM1) from Saccharomyces cerevisiae (strain ATCC 204508 / S288c) (Baker's yeast).